Reading from the N-terminus, the 394-residue chain is Imidazolonepropionase (394 aa).

Fe(3+)-binding residues include His-61 and His-63. Zn(2+) is bound by residues His-61 and His-63. 3 residues coordinate 4-imidazolone-5-propanoate: Arg-70, Tyr-133, and His-164. Tyr-133 provides a ligand contact to N-formimidoyl-L-glutamate. A Fe(3+)-binding site is contributed by His-225. His-225 is a binding site for Zn(2+). Glu-228 is a binding site for 4-imidazolone-5-propanoate. Asp-299 provides a ligand contact to Fe(3+). Asp-299 is a Zn(2+) binding site.

The protein belongs to the metallo-dependent hydrolases superfamily. HutI family. The cofactor is Zn(2+). Fe(3+) is required as a cofactor.

It localises to the cytoplasm. It catalyses the reaction 4-imidazolone-5-propanoate + H2O = N-formimidoyl-L-glutamate. It participates in amino-acid degradation; L-histidine degradation into L-glutamate; N-formimidoyl-L-glutamate from L-histidine: step 3/3. Its function is as follows. Catalyzes the hydrolytic cleavage of the carbon-nitrogen bond in imidazolone-5-propanoate to yield N-formimidoyl-L-glutamate. It is the third step in the universal histidine degradation pathway. In Picrophilus torridus (strain ATCC 700027 / DSM 9790 / JCM 10055 / NBRC 100828 / KAW 2/3), this protein is Imidazolonepropionase.